Here is a 185-residue protein sequence, read N- to C-terminus: Putative lipoprotein LprB (185 aa).

The signal sequence occupies residues 1-24 (MRRKVRRLTLAVSALVALFPAVAG). The N-palmitoyl cysteine moiety is linked to residue cysteine 25. Cysteine 25 carries S-diacylglycerol cysteine lipidation. The tract at residues 26-50 (SDSGDNKPGATIPSTPANAEGRHGP) is disordered.

It is found in the cell membrane. The polypeptide is Putative lipoprotein LprB (lprB) (Mycobacterium tuberculosis (strain CDC 1551 / Oshkosh)).